Reading from the N-terminus, the 146-residue chain is Globin-1 (146 aa).

Residues 9-146 (QLTADVKKDL…KLVAVVQAAL (138 aa)) form the Globin domain. His-101 provides a ligand contact to heme b.

The protein belongs to the globin family. Homodimer.

It localises to the cytoplasm. The sequence is that of Globin-1 from Anadara inaequivalvis (Inequivalve ark).